A 194-amino-acid polypeptide reads, in one-letter code: MRLILLGPPGAGKGTQAGLLTKKHGIPQLSTGDMLRAAVAQQSEIGKRAKAVMDAGQLVSDEIVNQIVSERIDAPDCANGFILDGYPRTVPQAQALSQMLSGKGLKLDAVIELKVDENALVKRMESRVAETIAKGGQVRSDDNPEAFRKRLVEYREKTAPLSSYYAGTGELRIINGMAPVEEVTAEIERILVPA.

10–15 (GAGKGT) is an ATP binding site. The tract at residues 30–59 (STGDMLRAAVAQQSEIGKRAKAVMDAGQLV) is NMP. AMP is bound by residues threonine 31, arginine 36, 57–59 (QLV), 85–88 (GYPR), and glutamine 92. The LID stretch occupies residues 126–142 (SRVAETIAKGGQVRSDD). Residue arginine 127 coordinates ATP. 2 residues coordinate AMP: arginine 139 and arginine 150. Alanine 178 is an ATP binding site.

Belongs to the adenylate kinase family. As to quaternary structure, monomer.

The protein localises to the cytoplasm. The enzyme catalyses AMP + ATP = 2 ADP. The protein operates within purine metabolism; AMP biosynthesis via salvage pathway; AMP from ADP: step 1/1. Functionally, catalyzes the reversible transfer of the terminal phosphate group between ATP and AMP. Plays an important role in cellular energy homeostasis and in adenine nucleotide metabolism. In Brucella abortus (strain S19), this protein is Adenylate kinase.